A 209-amino-acid polypeptide reads, in one-letter code: Uracil phosphoribosyltransferase (209 aa).

5-phospho-alpha-D-ribose 1-diphosphate contacts are provided by residues Arg-79, Arg-104, and Asp-131–Ser-139. Residues Ile-194 and Gly-199 to Ala-201 each bind uracil. Asp-200 contributes to the 5-phospho-alpha-D-ribose 1-diphosphate binding site.

The protein belongs to the UPRTase family. It depends on Mg(2+) as a cofactor.

It catalyses the reaction UMP + diphosphate = 5-phospho-alpha-D-ribose 1-diphosphate + uracil. It functions in the pathway pyrimidine metabolism; UMP biosynthesis via salvage pathway; UMP from uracil: step 1/1. Its activity is regulated as follows. Allosterically activated by GTP. Its function is as follows. Catalyzes the conversion of uracil and 5-phospho-alpha-D-ribose 1-diphosphate (PRPP) to UMP and diphosphate. In Citrifermentans bemidjiense (strain ATCC BAA-1014 / DSM 16622 / JCM 12645 / Bem) (Geobacter bemidjiensis), this protein is Uracil phosphoribosyltransferase.